We begin with the raw amino-acid sequence, 715 residues long: Polyribonucleotide nucleotidyltransferase (715 aa).

2 residues coordinate Mg(2+): Asp-493 and Asp-499. Residues 560–619 enclose the KH domain; it reads PRMITIKINPEKIRDVIGKGGSVIRALTEETGTTIDISDDGVVTIASTSSEGMAEAKKRI. The S1 motif domain maps to 629 to 697; that stretch reads GQVYEGTVLK…EKGRVRLSAK (69 aa).

This sequence belongs to the polyribonucleotide nucleotidyltransferase family. Mg(2+) is required as a cofactor.

It is found in the cytoplasm. The catalysed reaction is RNA(n+1) + phosphate = RNA(n) + a ribonucleoside 5'-diphosphate. Its function is as follows. Involved in mRNA degradation. Catalyzes the phosphorolysis of single-stranded polyribonucleotides processively in the 3'- to 5'-direction. This is Polyribonucleotide nucleotidyltransferase from Burkholderia vietnamiensis (strain G4 / LMG 22486) (Burkholderia cepacia (strain R1808)).